Here is a 92-residue protein sequence, read N- to C-terminus: Small ribosomal subunit protein bS21 (92 aa).

Residues 37-92 (QREGTFREMKRRNHYEKPSEKKARQKAEAIRRARKLARKRAQREGLIAKRGGTTRR) form a disordered region. The segment covering 51 to 67 (YEKPSEKKARQKAEAIR) has biased composition (basic and acidic residues). The segment covering 68–77 (RARKLARKRA) has biased composition (basic residues).

It belongs to the bacterial ribosomal protein bS21 family.

This is Small ribosomal subunit protein bS21 from Maricaulis maris (strain MCS10) (Caulobacter maris).